The chain runs to 234 residues: Adenosine 5'-phosphosulfate reductase (234 aa).

[4Fe-4S] cluster-binding residues include C120, C121, C203, and C206. Catalysis depends on C229, which acts as the Nucleophile; cysteine thiosulfonate intermediate.

The protein belongs to the PAPS reductase family. CysH subfamily. [4Fe-4S] cluster is required as a cofactor.

It localises to the cytoplasm. It carries out the reaction [thioredoxin]-disulfide + sulfite + AMP + 2 H(+) = adenosine 5'-phosphosulfate + [thioredoxin]-dithiol. It functions in the pathway sulfur metabolism; hydrogen sulfide biosynthesis; sulfite from sulfate. Catalyzes the formation of sulfite from adenosine 5'-phosphosulfate (APS) using thioredoxin as an electron donor. This chain is Adenosine 5'-phosphosulfate reductase, found in Bacillus cereus (strain ZK / E33L).